The sequence spans 1812 residues: Protein virilizer homolog (1812 aa).

The residue at position 2 (Ala-2) is an N-acetylalanine. Disordered regions lie at residues 132-302 (ISHD…EQIS) and 576-596 (KTSS…GLER). Residues Ser-133 and Ser-138 each carry the phosphoserine modification. The segment covering 139–152 (PPPPPPPPPPPQPQ) has biased composition (pro residues). Basic and acidic residues predominate over residues 160–169 (KHADGEKEDQ). Phosphoserine is present on Ser-173. Positions 174–190 (PPRPQPRGPRTPPGPPP) are enriched in pro residues. Phosphothreonine is present on Thr-184. Ser-222 is subject to Phosphoserine. A compositionally biased stretch (polar residues) spans 224–233 (DRNSVPQEGQ). Acidic residues-rich tracts occupy residues 234–266 (YSDE…EDED) and 274–302 (IPEE…EQIS). Residues 584-596 (SEPDHDTDAGLER) are compositionally biased toward basic and acidic residues. The residue at position 914 (Tyr-914) is a Phosphotyrosine. Position 1579 is a phosphoserine (Ser-1579). Disordered stretches follow at residues 1616 to 1635 (HVVP…GIRP) and 1663 to 1812 (KEVV…SFTR). Over residues 1689–1698 (GFSGNRGGRG) the composition is skewed to gly residues. A Phosphothreonine modification is found at Thr-1708. Position 1723 is an omega-N-methylarginine (Arg-1723). The span at 1723 to 1748 (RGSSWSAQNTPRGNYNESRGGQSNFN) shows a compositional bias: polar residues. Position 1741 is an asymmetric dimethylarginine; alternate (Arg-1741). Arg-1741 is modified (omega-N-methylarginine; alternate). An asymmetric dimethylarginine mark is found at Arg-1773, Arg-1775, and Arg-1793. Gly residues predominate over residues 1788 to 1802 (GSGGSRGKFVSGGSG). Positions 1803–1812 (RGRHVRSFTR) are enriched in basic residues.

Belongs to the vir family. In terms of assembly, component of the WMM complex, a N6-methyltransferase complex composed of a catalytic subcomplex, named MAC, and of an associated subcomplex, named MACOM. The MAC subcomplex is composed of METTL3 and METTL14. The MACOM subcomplex is composed of WTAP, ZC3H13, CBLL1/HAKAI, VIRMA, and, in some cases of RBM15 (RBM15 or RBM15B). Interacts with WTAP. Also a component of a MACOM-like complex, named WTAP complex, composed of WTAP, ZC3H13, CBLL1, VIRMA, RBM15, BCLAF1 and THRAP3. Interacts with NUDT21 and CPSF6.

The protein localises to the nucleus speckle. Its subcellular location is the nucleus. It localises to the nucleoplasm. It is found in the cytoplasm. Functionally, associated component of the WMM complex, a complex that mediates N6-methyladenosine (m6A) methylation of RNAs, a modification that plays a role in the efficiency of mRNA splicing and RNA processing. Acts as a key regulator of m6A methylation by promoting m6A methylation of mRNAs in the 3'-UTR near the stop codon: recruits the catalytic core components METTL3 and METTL14, thereby guiding m6A methylation at specific sites. Required for mRNA polyadenylation via its role in selective m6A methylation: m6A methylation of mRNAs in the 3'-UTR near the stop codon correlating with alternative polyadenylation (APA). This chain is Protein virilizer homolog, found in Homo sapiens (Human).